The primary structure comprises 231 residues: Aquaporin Z (231 aa).

Helical transmembrane passes span 11-31 (FLGT…AAAF) and 36-56 (IGLL…AFAI). The short motif at 65–67 (NPA) is the NPA 1 element. Transmembrane regions (helical) follow at residues 84 to 104 (LPYI…LYLI), 132 to 152 (MISV…VILG), and 161 to 181 (GFAP…SIPI). Positions 187 to 189 (NPA) match the NPA 2 motif. The chain crosses the membrane as a helical span at residues 203 to 223 (VSQLWLFWAAPIIGAILAGVI).

It belongs to the MIP/aquaporin (TC 1.A.8) family. Homotetramer.

Its subcellular location is the cell inner membrane. It carries out the reaction H2O(in) = H2O(out). Functionally, channel that permits osmotically driven movement of water in both directions. It is involved in the osmoregulation and in the maintenance of cell turgor during volume expansion in rapidly growing cells. It mediates rapid entry or exit of water in response to abrupt changes in osmolarity. The polypeptide is Aquaporin Z (Shewanella oneidensis (strain ATCC 700550 / JCM 31522 / CIP 106686 / LMG 19005 / NCIMB 14063 / MR-1)).